Reading from the N-terminus, the 261-residue chain is Indole-3-glycerol phosphate synthase (261 aa).

It belongs to the TrpC family.

It carries out the reaction 1-(2-carboxyphenylamino)-1-deoxy-D-ribulose 5-phosphate + H(+) = (1S,2R)-1-C-(indol-3-yl)glycerol 3-phosphate + CO2 + H2O. It participates in amino-acid biosynthesis; L-tryptophan biosynthesis; L-tryptophan from chorismate: step 4/5. The polypeptide is Indole-3-glycerol phosphate synthase (Oceanobacillus iheyensis (strain DSM 14371 / CIP 107618 / JCM 11309 / KCTC 3954 / HTE831)).